The chain runs to 119 residues: MARVKGGVVSRKRRKRILKLAKGYYGAKHILFRTAKEQVMNSYYYAYRDRRQKKRDFRKLWITRINAAARLNGLSYSQLMHGLKLAEIEVNRKMLADLAVNDATAFTALADAAKAKLGK.

This sequence belongs to the bacterial ribosomal protein bL20 family.

In terms of biological role, binds directly to 23S ribosomal RNA and is necessary for the in vitro assembly process of the 50S ribosomal subunit. It is not involved in the protein synthesizing functions of that subunit. This is Large ribosomal subunit protein bL20 from Streptococcus gordonii (strain Challis / ATCC 35105 / BCRC 15272 / CH1 / DL1 / V288).